We begin with the raw amino-acid sequence, 594 residues long: Aspartate--tRNA(Asp/Asn) ligase (594 aa).

Position 175 (Glu175) interacts with L-aspartate. An aspartate region spans residues 199-202 (QQLK). Arg221 contributes to the L-aspartate binding site. Residues 221–223 (RDE) and Gln230 contribute to the ATP site. Position 450 (His450) interacts with L-aspartate. Glu485 serves as a coordination point for ATP. Position 492 (Arg492) interacts with L-aspartate. Residue 537 to 540 (GIDR) participates in ATP binding.

The protein belongs to the class-II aminoacyl-tRNA synthetase family. Type 1 subfamily. In terms of assembly, homodimer.

Its subcellular location is the cytoplasm. It carries out the reaction tRNA(Asx) + L-aspartate + ATP = L-aspartyl-tRNA(Asx) + AMP + diphosphate. Aspartyl-tRNA synthetase with relaxed tRNA specificity since it is able to aspartylate not only its cognate tRNA(Asp) but also tRNA(Asn). Reaction proceeds in two steps: L-aspartate is first activated by ATP to form Asp-AMP and then transferred to the acceptor end of tRNA(Asp/Asn). The chain is Aspartate--tRNA(Asp/Asn) ligase from Herpetosiphon aurantiacus (strain ATCC 23779 / DSM 785 / 114-95).